A 162-amino-acid chain; its full sequence is Nucleotide-binding protein Adeh_0094 (162 aa).

Belongs to the YajQ family.

Its function is as follows. Nucleotide-binding protein. The chain is Nucleotide-binding protein Adeh_0094 from Anaeromyxobacter dehalogenans (strain 2CP-C).